The primary structure comprises 404 residues: uncharacterized protein (404 aa).

Disordered stretches follow at residues 261–307 (VSTG…SPSL) and 320–340 (KKSH…GGAD). 3 positions are modified to phosphoserine: Ser-267, Ser-276, and Ser-279. Thr-290 and Thr-293 each carry phosphothreonine. Phosphoserine is present on residues Ser-304, Ser-306, Ser-324, Ser-358, and Ser-362. Residues 320 to 336 (KKSHSANDSEEFFREDD) show a composition bias toward basic and acidic residues.

This is an uncharacterized protein from Homo sapiens (Human).